The chain runs to 150 residues: MIP18 family protein FAM96A (150 aa).

Belongs to the MIP18 family.

May play a role in chromosome segregation through establishment of sister chromatid cohesion. In Dictyostelium discoideum (Social amoeba), this protein is MIP18 family protein FAM96A (fam96A).